Consider the following 535-residue polypeptide: 3-hydroxyindolin-2-one monooxygenase (535 aa).

Transmembrane regions (helical) follow at residues 14-34 (VVQCTPTQAAAVLGVLLLLAI) and 469-489 (ICAGATFAIATVEIMLANLIY). C470 is a heme binding site.

It belongs to the cytochrome P450 family. Heme serves as cofactor.

It localises to the membrane. The enzyme catalyses 3-hydroxyindolin-2-one + reduced [NADPH--hemoprotein reductase] + O2 = 2-hydroxy-2H-1,4-benzoxazin-3(4H)-one + oxidized [NADPH--hemoprotein reductase] + H2O + H(+). The protein operates within secondary metabolite biosynthesis; 2,4-dihydroxy-1,4-benzoxazin-3-one biosynthesis; 2,4-dihydroxy-1,4-benzoxazin-3-one from indoleglycerol phosphate: step 4/5. Catalyzes the conversion of 3-hydroxyindolin-2-one to 2-hydroxy-1,4-benzoxazin-3-one (HBOA). The sequence is that of 3-hydroxyindolin-2-one monooxygenase (CYP71C1) from Zea mays (Maize).